The sequence spans 204 residues: Imidazole glycerol phosphate synthase subunit HisH 1 (204 aa).

A Glutamine amidotransferase type-1 domain is found at 5–204 (KVVIIDTGCA…AKLIQNFLEL (200 aa)). Catalysis depends on cysteine 80, which acts as the Nucleophile. Catalysis depends on residues histidine 186 and glutamate 188.

In terms of assembly, heterodimer of HisH and HisF.

The protein localises to the cytoplasm. The catalysed reaction is 5-[(5-phospho-1-deoxy-D-ribulos-1-ylimino)methylamino]-1-(5-phospho-beta-D-ribosyl)imidazole-4-carboxamide + L-glutamine = D-erythro-1-(imidazol-4-yl)glycerol 3-phosphate + 5-amino-1-(5-phospho-beta-D-ribosyl)imidazole-4-carboxamide + L-glutamate + H(+). It carries out the reaction L-glutamine + H2O = L-glutamate + NH4(+). Its pathway is amino-acid biosynthesis; L-histidine biosynthesis; L-histidine from 5-phospho-alpha-D-ribose 1-diphosphate: step 5/9. Its function is as follows. IGPS catalyzes the conversion of PRFAR and glutamine to IGP, AICAR and glutamate. The HisH subunit provides the glutamine amidotransferase activity that produces the ammonia necessary to HisF for the synthesis of IGP and AICAR. The chain is Imidazole glycerol phosphate synthase subunit HisH 1 (hisH1) from Vibrio vulnificus (strain YJ016).